Consider the following 336-residue polypeptide: Ketol-acid reductoisomerase (NADP(+)) (336 aa).

Positions 1–181 (MKVYYDQDAD…GGGRSGIIET (181 aa)) constitute a KARI N-terminal Rossmann domain. NADP(+) is bound by residues 24–27 (YGSQ), Arg47, Ser50, and Ser52. The active site involves His107. An NADP(+)-binding site is contributed by Gly133. Positions 182–327 (SFREETETDL…ERLRGMMPWI (146 aa)) constitute a KARI C-terminal knotted domain. Mg(2+)-binding residues include Asp190, Glu194, Glu226, and Glu230. Residue Ser251 coordinates substrate.

This sequence belongs to the ketol-acid reductoisomerase family. Mg(2+) serves as cofactor.

The enzyme catalyses (2R)-2,3-dihydroxy-3-methylbutanoate + NADP(+) = (2S)-2-acetolactate + NADPH + H(+). It catalyses the reaction (2R,3R)-2,3-dihydroxy-3-methylpentanoate + NADP(+) = (S)-2-ethyl-2-hydroxy-3-oxobutanoate + NADPH + H(+). Its pathway is amino-acid biosynthesis; L-isoleucine biosynthesis; L-isoleucine from 2-oxobutanoate: step 2/4. The protein operates within amino-acid biosynthesis; L-valine biosynthesis; L-valine from pyruvate: step 2/4. Involved in the biosynthesis of branched-chain amino acids (BCAA). Catalyzes an alkyl-migration followed by a ketol-acid reduction of (S)-2-acetolactate (S2AL) to yield (R)-2,3-dihydroxy-isovalerate. In the isomerase reaction, S2AL is rearranged via a Mg-dependent methyl migration to produce 3-hydroxy-3-methyl-2-ketobutyrate (HMKB). In the reductase reaction, this 2-ketoacid undergoes a metal-dependent reduction by NADPH to yield (R)-2,3-dihydroxy-isovalerate. In Halorhodospira halophila (strain DSM 244 / SL1) (Ectothiorhodospira halophila (strain DSM 244 / SL1)), this protein is Ketol-acid reductoisomerase (NADP(+)).